Reading from the N-terminus, the 794-residue chain is Potassium transporter 2 (794 aa).

Topologically, residues 1-21 are cytoplasmic; it reads MDLNLGKCCGSRSSKKESWRS. The chain crosses the membrane as a helical span at residues 22 to 42; sequence VLLLAYQSLGVVYGDLSISPL. At 43–64 the chain is on the extracellular side; it reads YVFKSTFAEDIQHSETNEEIYG. A helical membrane pass occupies residues 65–85; it reads VMSFVFWTLTLVPLLKYVFIV. At 86–153 the chain is on the cytoplasmic side; sequence LRADDNGEGG…EKHKWLHTAL (68 aa). The chain crosses the membrane as a helical span at residues 154–174; sequence LLLVLLGTCMVIGDGLLTPAI. At 175 to 193 the chain is on the extracellular side; it reads SVFSAVSGLELNMSKEHHQ. The chain crosses the membrane as a helical span at residues 194–214; that stretch reads YAVIPITCFILVCLFSLQHFG. Topologically, residues 215–217 are cytoplasmic; that stretch reads THR. A helical membrane pass occupies residues 218-238; sequence VGFVFAPIVLTWLLCISGIGL. Over 239–265 the chain is Extracellular; that stretch reads YNIIQWNPHIYKALSPTYMFMFLRKTR. Residues 266 to 286 traverse the membrane as a helical segment; the sequence is VSGWMSLGGILLCITGAEAMF. Topologically, residues 287-294 are cytoplasmic; that stretch reads ADLGHFNY. Residues 295 to 315 form a helical membrane-spanning segment; sequence AAIQIAFTFLVYPALILAYMG. Residues 316–339 are Extracellular-facing; it reads QAAYLSRHHHSAHAIGFYVSVPKC. Residues 340–360 traverse the membrane as a helical segment; the sequence is LHWPVLAVAILASVVGSQAII. At 361 to 391 the chain is on the cytoplasmic side; sequence SGTFSIINQSQSLGCFPRVKVIHTSDKMHGQ. Residues 392–412 form a helical membrane-spanning segment; the sequence is IYIPEINWMLMILCIAVTIGF. The Extracellular portion of the chain corresponds to 413–417; it reads RDVKH. 2 helical membrane-spanning segments follow: residues 418–438 and 439–459; these read LGNA…CLTS and LVIV…LLFF. Topologically, residues 460–476 are extracellular; the sequence is GSIELLYFSASLTKFRE. Residues 477-497 traverse the membrane as a helical segment; that stretch reads GAWLPILLSLIFMIIMFVWHY. The Cytoplasmic portion of the chain corresponds to 498–794; sequence TTIKKYEFDL…LLEVGMVYVV (297 aa).

Belongs to the HAK/KUP transporter (TC 2.A.72.3) family. In terms of tissue distribution, slightly detected in roots, stems, leaves and flowers of mature plants and in potassium-starved plants.

The protein resides in the cell membrane. Functionally, low-affinity potassium transporter. Could mediate the potassium-dependent cell expansion in growing tissues. The polypeptide is Potassium transporter 2 (POT2) (Arabidopsis thaliana (Mouse-ear cress)).